The chain runs to 1278 residues: Alpha-glucan water dikinase 2 (1278 aa).

A signal peptide spans 1-23 (MATSKSQQFQLIEGMELQITVTG). Catalysis depends on His-886, which acts as the Tele-phosphohistidine intermediate.

Belongs to the PEP-utilizing enzyme family. In terms of assembly, homodimer. The cofactor is Mg(2+).

It carries out the reaction [(1-&gt;4)-alpha-D-glucosyl](n) + n ATP + n H2O = [(1-&gt;4)-6-phospho-alpha-D-glucosyl](n) + n AMP + n phosphate + 2n H(+). In terms of biological role, mediates the incorporation of phosphate into alpha-glucan, mostly at the C-6 position of glucose units. This chain is Alpha-glucan water dikinase 2 (GWD2), found in Arabidopsis thaliana (Mouse-ear cress).